The following is a 228-amino-acid chain: SPbeta prophage-derived uncharacterized protein YomL (228 aa).

The signal sequence occupies residues 1–28 (MRKKRVITCVMAASLTLGSLLPAGYATA).

The protein is SPbeta prophage-derived uncharacterized protein YomL (yomL) of Bacillus subtilis (strain 168).